The sequence spans 208 residues: Guanylate kinase (208 aa).

Residues 4-184 form the Guanylate kinase-like domain; it reads GTLYIVSAPS…ALMDFKAIIR (181 aa). 11–18 serves as a coordination point for ATP; the sequence is APSGAGKS.

This sequence belongs to the guanylate kinase family.

The protein resides in the cytoplasm. The catalysed reaction is GMP + ATP = GDP + ADP. Functionally, essential for recycling GMP and indirectly, cGMP. In Photobacterium profundum (strain SS9), this protein is Guanylate kinase.